The following is a 70-amino-acid chain: MMGKLGVVLFICLVLFPLETLQLEGGQQADRHVDQLEGNPNRETRTIEVRCTTMNCLKGHCGCSPDCGSC.

The first 20 residues, 1-20, serve as a signal peptide directing secretion; sequence MMGKLGVVLFICLVLFPLET. Positions 21-50 are excised as a propeptide; that stretch reads LQLEGGQQADRHVDQLEGNPNRETRTIEVR. Cystine bridges form between Cys51–Cys63, Cys56–Cys67, and Cys61–Cys70.

The protein belongs to the conotoxin M superfamily. In terms of tissue distribution, expressed by the venom duct.

It localises to the secreted. The sequence is that of Conotoxin Cl9.1 from Californiconus californicus (California cone).